Consider the following 92-residue polypeptide: Small ribosomal subunit protein uS19 (92 aa).

It belongs to the universal ribosomal protein uS19 family.

Its function is as follows. Protein S19 forms a complex with S13 that binds strongly to the 16S ribosomal RNA. This is Small ribosomal subunit protein uS19 from Desulfosudis oleivorans (strain DSM 6200 / JCM 39069 / Hxd3) (Desulfococcus oleovorans).